The primary structure comprises 700 residues: Methionine--tRNA ligase (700 aa).

The 'HIGH' region signature appears at 13-23 (PYANGDIHLGH). Residues C144, C147, C157, and C160 each coordinate Zn(2+). Positions 341 to 345 (KMSKS) match the 'KMSKS' region motif. K344 contributes to the ATP binding site. One can recognise a tRNA-binding domain in the interval 598–700 (DFAKVEMKVA…DNCVIGDLLA (103 aa)).

It belongs to the class-I aminoacyl-tRNA synthetase family. MetG type 1 subfamily. Homodimer. Zn(2+) serves as cofactor.

It is found in the cytoplasm. The enzyme catalyses tRNA(Met) + L-methionine + ATP = L-methionyl-tRNA(Met) + AMP + diphosphate. Its function is as follows. Is required not only for elongation of protein synthesis but also for the initiation of all mRNA translation through initiator tRNA(fMet) aminoacylation. This chain is Methionine--tRNA ligase, found in Psychrobacter arcticus (strain DSM 17307 / VKM B-2377 / 273-4).